The chain runs to 419 residues: Peptide chain release factor subunit 1 (419 aa).

This sequence belongs to the eukaryotic release factor 1 family. In terms of assembly, heterodimer of two subunits, one of which binds GTP.

Its subcellular location is the cytoplasm. Functionally, directs the termination of nascent peptide synthesis (translation) in response to the termination codons UAA, UAG and UGA. The polypeptide is Peptide chain release factor subunit 1 (Methanococcus maripaludis (strain C7 / ATCC BAA-1331)).